The chain runs to 113 residues: Bactofilin BacN (113 aa).

Belongs to the bactofilin family. As to quaternary structure, interacts with BacO and BacP, the 3 proteins colocalize as an extended structure.

The protein resides in the cytoplasm. It localises to the cytoskeleton. In terms of biological role, a non-essential component of the chromosome segregation machinery. Positions the ParA-ParB-parS chromosome segregation machinery within the cell; BacP seems to be the most important bactofilin in this process. Forms a heteropolymeric, subpolar scaffold in the cell; BacP probably forms the core, BacO contributes to position and integrity while BacN does not seem to contribute to assembly. In Myxococcus xanthus (strain DK1622), this protein is Bactofilin BacN.